The following is a 260-amino-acid chain: Small ribosomal subunit protein eS4 (260 aa).

The S4 RNA-binding domain occupies 46–111 (VPLLILVRDM…RYRVVMNEHH (66 aa)).

The protein belongs to the eukaryotic ribosomal protein eS4 family.

The protein is Small ribosomal subunit protein eS4 of Methanopyrus kandleri (strain AV19 / DSM 6324 / JCM 9639 / NBRC 100938).